Consider the following 244-residue polypeptide: Small ribosomal subunit protein uS3 (244 aa).

The region spanning 39–107 (MRKFVMSELK…ETHLNIVEVR (69 aa)) is the KH type-2 domain. Positions 214–244 (ASERRALEGDAQGPASRERDRGDRRRERDNA) are disordered. A compositionally biased stretch (basic and acidic residues) spans 229–244 (SRERDRGDRRRERDNA).

It belongs to the universal ribosomal protein uS3 family. Part of the 30S ribosomal subunit. Forms a tight complex with proteins S10 and S14.

Its function is as follows. Binds the lower part of the 30S subunit head. Binds mRNA in the 70S ribosome, positioning it for translation. This Rhizobium etli (strain CIAT 652) protein is Small ribosomal subunit protein uS3.